A 219-amino-acid chain; its full sequence is Large ribosomal subunit protein uL29m (219 aa).

The interval A77–T97 is disordered. Over residues S87–T97 the composition is skewed to basic and acidic residues.

The protein belongs to the universal ribosomal protein uL29 family. Component of the mitochondrial large ribosomal subunit. Mature mitochondrial ribosomes consist of a small (37S) and a large (54S) subunit. The 37S subunit contains at least 33 different proteins and 1 molecule of RNA (15S). The 54S subunit contains at least 45 different proteins and 1 molecule of RNA (21S).

The protein resides in the mitochondrion. In Emericella nidulans (strain FGSC A4 / ATCC 38163 / CBS 112.46 / NRRL 194 / M139) (Aspergillus nidulans), this protein is Large ribosomal subunit protein uL29m (mrpl4).